Here is a 507-residue protein sequence, read N- to C-terminus: Nuclear distribution protein PAC1 (507 aa).

Residues 72-98 are a coiled coil; it reads STVLRLQRKIMDLTDEVSNLKTIIEAK. 7 WD repeats span residues 125-164, 170-222, 225-265, 268-312, 315-389, 410-449, and 474-507; these read QTHQ…PSIP, AHSR…QIRI, GHDH…CTRT, GHSD…GLCL, GHSH…VRPN, GHQS…TGGR, and PKDT…RLWS.

Belongs to the WD repeat LIS1/nudF family. As to quaternary structure, self-associates. Interacts with NDL1 and dynein.

It is found in the cytoplasm. It localises to the cytoskeleton. The protein localises to the spindle pole. Functionally, positively regulates the activity of the minus-end directed microtubule motor protein dynein. Plays a central role in positioning the mitotic spindle at the bud neck during cell division. Targets cytoplasmic dynein to microtubule plus ends, thereby promoting dynein-mediated microtubule sliding along the bud cortex and consequently the movement of the mitotic spindle to the bud neck. In Meyerozyma guilliermondii (strain ATCC 6260 / CBS 566 / DSM 6381 / JCM 1539 / NBRC 10279 / NRRL Y-324) (Yeast), this protein is Nuclear distribution protein PAC1.